Reading from the N-terminus, the 75-residue chain is ATP synthase subunit 9, mitochondrial (75 aa).

A run of 2 helical transmembrane segments spans residues 10-30 (LVLG…GILF) and 55-75 (FALV…VYFI).

This sequence belongs to the ATPase C chain family. In terms of assembly, F-type ATPases have 2 components, CF(1) - the catalytic core - and CF(0) - the membrane proton channel. CF(1) has five subunits: alpha(3), beta(3), gamma(1), delta(1), epsilon(1). CF(0) has three main subunits: a, b and c.

The protein localises to the mitochondrion membrane. Functionally, mitochondrial membrane ATP synthase (F(1)F(0) ATP synthase or Complex V) produces ATP from ADP in the presence of a proton gradient across the membrane which is generated by electron transport complexes of the respiratory chain. F-type ATPases consist of two structural domains, F(1) - containing the extramembraneous catalytic core and F(0) - containing the membrane proton channel, linked together by a central stalk and a peripheral stalk. During catalysis, ATP synthesis in the catalytic domain of F(1) is coupled via a rotary mechanism of the central stalk subunits to proton translocation. Part of the complex F(0) domain. A homomeric c-ring of probably 10 subunits is part of the complex rotary element. This is ATP synthase subunit 9, mitochondrial (ATP9) from Paramecium tetraurelia.